The following is a 333-amino-acid chain: NADH-quinone oxidoreductase subunit H (333 aa).

A run of 8 helical transmembrane segments spans residues 15 to 35 (LVIF…FVTY), 88 to 108 (FILA…TLPF), 117 to 137 (IGVG…GVVA), 159 to 179 (ISYE…TGSL), 191 to 211 (VWYI…AVAE), 250 to 270 (LFAM…PVMF), 273 to 293 (FIPG…VLIW), and 313 to 333 (VLFP…ELFF).

The protein belongs to the complex I subunit 1 family. As to quaternary structure, NDH-1 is composed of 14 different subunits. Subunits NuoA, H, J, K, L, M, N constitute the membrane sector of the complex.

Its subcellular location is the cell membrane. The catalysed reaction is a quinone + NADH + 5 H(+)(in) = a quinol + NAD(+) + 4 H(+)(out). In terms of biological role, NDH-1 shuttles electrons from NADH, via FMN and iron-sulfur (Fe-S) centers, to quinones in the respiratory chain. The immediate electron acceptor for the enzyme in this species is believed to be ubiquinone. Couples the redox reaction to proton translocation (for every two electrons transferred, four hydrogen ions are translocated across the cytoplasmic membrane), and thus conserves the redox energy in a proton gradient. This subunit may bind ubiquinone. The protein is NADH-quinone oxidoreductase subunit H of Geobacillus sp. (strain WCH70).